A 43-amino-acid polypeptide reads, in one-letter code: Protein PsbN (43 aa).

The helical transmembrane segment at 5 to 27 (TLVAISISGSLVSFTGYALYTAF) threads the bilayer.

This sequence belongs to the PsbN family.

Its subcellular location is the plastid. The protein localises to the chloroplast thylakoid membrane. Functionally, may play a role in photosystem I and II biogenesis. In Lactoris fernandeziana, this protein is Protein PsbN.